We begin with the raw amino-acid sequence, 66 residues long: DNA-directed RNA polymerase subunit Rpo10 (66 aa).

Zn(2+)-binding residues include Cys7, Cys10, Cys44, and Cys45.

It belongs to the archaeal Rpo10/eukaryotic RPB10 RNA polymerase subunit family. As to quaternary structure, part of the RNA polymerase complex. It depends on Zn(2+) as a cofactor.

The protein resides in the cytoplasm. The enzyme catalyses RNA(n) + a ribonucleoside 5'-triphosphate = RNA(n+1) + diphosphate. In terms of biological role, DNA-dependent RNA polymerase (RNAP) catalyzes the transcription of DNA into RNA using the four ribonucleoside triphosphates as substrates. In Staphylothermus marinus (strain ATCC 43588 / DSM 3639 / JCM 9404 / F1), this protein is DNA-directed RNA polymerase subunit Rpo10.